Here is a 332-residue protein sequence, read N- to C-terminus: Holliday junction branch migration complex subunit RuvB (332 aa).

The tract at residues 1-181 is large ATPase domain (RuvB-L); sequence MSRILDNEQM…FGITGHMEYY (181 aa). Residues Leu20, Arg21, Gly62, Lys65, Thr66, Thr67, 128-130, Arg171, Tyr181, and Arg218 contribute to the ATP site; that span reads EDF. Thr66 provides a ligand contact to Mg(2+). A small ATPAse domain (RuvB-S) region spans residues 182–252; the sequence is EEADLTEIVE…ITDQALSMLD (71 aa). The interval 255–332 is head domain (RuvB-H); sequence HEGLDYVDQK…EHLGYEYMEK (78 aa). DNA contacts are provided by Arg291, Arg310, Arg312, and Arg315.

Belongs to the RuvB family. Homohexamer. Forms an RuvA(8)-RuvB(12)-Holliday junction (HJ) complex. HJ DNA is sandwiched between 2 RuvA tetramers; dsDNA enters through RuvA and exits via RuvB. An RuvB hexamer assembles on each DNA strand where it exits the tetramer. Each RuvB hexamer is contacted by two RuvA subunits (via domain III) on 2 adjacent RuvB subunits; this complex drives branch migration. In the full resolvosome a probable DNA-RuvA(4)-RuvB(12)-RuvC(2) complex forms which resolves the HJ.

The protein resides in the cytoplasm. The catalysed reaction is ATP + H2O = ADP + phosphate + H(+). The RuvA-RuvB-RuvC complex processes Holliday junction (HJ) DNA during genetic recombination and DNA repair, while the RuvA-RuvB complex plays an important role in the rescue of blocked DNA replication forks via replication fork reversal (RFR). RuvA specifically binds to HJ cruciform DNA, conferring on it an open structure. The RuvB hexamer acts as an ATP-dependent pump, pulling dsDNA into and through the RuvAB complex. RuvB forms 2 homohexamers on either side of HJ DNA bound by 1 or 2 RuvA tetramers; 4 subunits per hexamer contact DNA at a time. Coordinated motions by a converter formed by DNA-disengaged RuvB subunits stimulates ATP hydrolysis and nucleotide exchange. Immobilization of the converter enables RuvB to convert the ATP-contained energy into a lever motion, pulling 2 nucleotides of DNA out of the RuvA tetramer per ATP hydrolyzed, thus driving DNA branch migration. The RuvB motors rotate together with the DNA substrate, which together with the progressing nucleotide cycle form the mechanistic basis for DNA recombination by continuous HJ branch migration. Branch migration allows RuvC to scan DNA until it finds its consensus sequence, where it cleaves and resolves cruciform DNA. The chain is Holliday junction branch migration complex subunit RuvB from Streptococcus gordonii (strain Challis / ATCC 35105 / BCRC 15272 / CH1 / DL1 / V288).